A 274-amino-acid polypeptide reads, in one-letter code: Rhamnulose-1-phosphate aldolase (274 aa).

E117 is a catalytic residue. The Zn(2+) site is built by H141, H143, and H212.

The protein belongs to the aldolase class II family. RhaD subfamily. Homotetramer. The cofactor is Zn(2+).

The protein resides in the cytoplasm. The catalysed reaction is L-rhamnulose 1-phosphate = (S)-lactaldehyde + dihydroxyacetone phosphate. It functions in the pathway carbohydrate degradation; L-rhamnose degradation; glycerone phosphate from L-rhamnose: step 3/3. In terms of biological role, catalyzes the reversible cleavage of L-rhamnulose-1-phosphate to dihydroxyacetone phosphate (DHAP) and L-lactaldehyde. In Escherichia coli O81 (strain ED1a), this protein is Rhamnulose-1-phosphate aldolase.